A 496-amino-acid chain; its full sequence is Ganglioside-induced differentiation-associated protein 2 (496 aa).

Disordered stretches follow at residues 22-45 (VRDG…GLHS) and 252-271 (PERQ…DSEE). In terms of domain architecture, Macro spans 44 to 224 (HSPFPYRNDI…TYRRLLPLYF (181 aa)). The span at 254–264 (RQIRISEKPGG) shows a compositional bias: basic and acidic residues. In terms of domain architecture, CRAL-TRIO spans 329–483 (DLSDIAALKA…FVLDYDAREN (155 aa)).

This sequence belongs to the GDAP2 family.

The chain is Ganglioside-induced differentiation-associated protein 2 from Xenopus tropicalis (Western clawed frog).